The primary structure comprises 406 residues: Argininosuccinate synthase (406 aa).

ATP is bound by residues 13–21 and A40; that span reads AYSGGLDTS. L-citrulline is bound by residues Y91 and S96. Residue G121 coordinates ATP. Residues T123, N127, and D128 each contribute to the L-aspartate site. N127 contacts L-citrulline. The L-citrulline site is built by R131, S182, S191, E267, and Y279.

The protein belongs to the argininosuccinate synthase family. Type 1 subfamily. In terms of assembly, homotetramer.

The protein resides in the cytoplasm. It carries out the reaction L-citrulline + L-aspartate + ATP = 2-(N(omega)-L-arginino)succinate + AMP + diphosphate + H(+). It participates in amino-acid biosynthesis; L-arginine biosynthesis; L-arginine from L-ornithine and carbamoyl phosphate: step 2/3. This chain is Argininosuccinate synthase, found in Brucella suis biovar 1 (strain 1330).